Here is a 376-residue protein sequence, read N- to C-terminus: MRTRAAVAVEAGKPLEIMEVNLEGPKAGEVMVEIKATGICHTDEFTLSGADPEGMFPAILGHEGAGVVVEVGPGVTSVKPGDHVIPLYTPECRQCPSCLSQKTNLCTAIRGTQGQGLMPDGTSRFSMLDGTPILHYMGCSTFSNYTVLPEIAVAKVRPDAPFDKICYIGCGVTTGIGAVINTAKVEIGAKAVVFGLGGIGLNVIQGLKLAGADMIIGVDLNNAKKEWGERFGMTHFVNPSEIDGDVVAHLVNMTKTPFDQIGGADYTFDCTGNVKVMRQALEACHRGWGQSIVIGVAPAGAEIQTRPFQLVTGRVWKGSAFGGARGRTDVPKIVDWYMEGKIQIDPMITHILSLEEINKGFDLMHAGESIRSVVVF.

7 residues coordinate Zn(2+): cysteine 40, histidine 62, cysteine 92, cysteine 95, cysteine 98, cysteine 106, and cysteine 170.

The protein belongs to the zinc-containing alcohol dehydrogenase family. Class-III subfamily. Homodimer. Zn(2+) is required as a cofactor.

It is found in the cytoplasm. The enzyme catalyses a primary alcohol + NAD(+) = an aldehyde + NADH + H(+). It catalyses the reaction a secondary alcohol + NAD(+) = a ketone + NADH + H(+). It carries out the reaction S-(hydroxymethyl)glutathione + NADP(+) = S-formylglutathione + NADPH + H(+). The catalysed reaction is S-(hydroxymethyl)glutathione + NAD(+) = S-formylglutathione + NADH + H(+). Its function is as follows. Oxidizes long-chain aliphatic alcohols, long-chain hydroxylated fatty acids and S-hydroxymethylglutathione (hmGSH) in increasing order of preference. Shows little or no activity with short-chain aliphatic alcohols. The chain is Alcohol dehydrogenase class-3 (adhI) from Cereibacter sphaeroides (strain ATCC 17023 / DSM 158 / JCM 6121 / CCUG 31486 / LMG 2827 / NBRC 12203 / NCIMB 8253 / ATH 2.4.1.) (Rhodobacter sphaeroides).